The chain runs to 100 residues: MISEERLLKVILAPHISEKSTVNAEKNNTVVFRVAIDATKAEVKAAVAQLFEVEVDSVRTLVNKGKTKRTGARVGRRSDWKKAYVTLAEGADIDFVGGAE.

This sequence belongs to the universal ribosomal protein uL23 family. As to quaternary structure, part of the 50S ribosomal subunit. Contacts protein L29, and trigger factor when it is bound to the ribosome.

Functionally, one of the early assembly proteins it binds 23S rRNA. One of the proteins that surrounds the polypeptide exit tunnel on the outside of the ribosome. Forms the main docking site for trigger factor binding to the ribosome. The protein is Large ribosomal subunit protein uL23 of Shewanella pealeana (strain ATCC 700345 / ANG-SQ1).